Reading from the N-terminus, the 184-residue chain is FMRFamide-like neuropeptides 3 (184 aa).

The first 23 residues, 1 to 23, serve as a signal peptide directing secretion; sequence MISPNHLILLFCVNCAFLVASDA. A propeptide spanning residues 24-25 is cleaved from the precursor; the sequence is TP. Phenylalanine 35 is subject to Phenylalanine amide. Positions 39–73 are excised as a propeptide; sequence AIADEMTFEEDGYYPSNVMWKRSTVDSSEPVIRDQ. A phenylalanine amide mark is found at phenylalanine 82, phenylalanine 95, phenylalanine 111, and phenylalanine 126. A disordered region spans residues 90-110; that stretch reads FGTMRFGKRNPENDTPFGTMR. Residues 130–142 constitute a propeptide that is removed on maturation; it reads EDGNAPFGTMKFG. The tract at residues 150-184 is disordered; the sequence is LGTMRFGKRSADDSAPFGTMRFGKRNPLGTMRFGK. Phenylalanine 155, phenylalanine 171, and phenylalanine 182 each carry phenylalanine amide.

It belongs to the FARP (FMRFamide related peptide) family. In terms of tissue distribution, each flp gene is expressed in a distinct set of neurons. Flp-3 is expressed in the IL1 and PQR neurons.

It localises to the secreted. In terms of biological role, FMRFamides and FMRFamide-like peptides are neuropeptides. SAEPFGTMRF-amide inhibits the activity of dissected pharyngeal myogenic muscle system. This chain is FMRFamide-like neuropeptides 3, found in Caenorhabditis elegans.